Reading from the N-terminus, the 368-residue chain is Phosphoserine aminotransferase (368 aa).

Arg42 contributes to the L-glutamate binding site. Residues 76–77 (AS), Trp102, Thr152, Asp179, and Gln202 contribute to the pyridoxal 5'-phosphate site. Lys203 carries the N6-(pyridoxal phosphate)lysine modification. 245–246 (NT) lines the pyridoxal 5'-phosphate pocket.

The protein belongs to the class-V pyridoxal-phosphate-dependent aminotransferase family. SerC subfamily. Homodimer. It depends on pyridoxal 5'-phosphate as a cofactor.

The protein localises to the cytoplasm. It carries out the reaction O-phospho-L-serine + 2-oxoglutarate = 3-phosphooxypyruvate + L-glutamate. It catalyses the reaction 4-(phosphooxy)-L-threonine + 2-oxoglutarate = (R)-3-hydroxy-2-oxo-4-phosphooxybutanoate + L-glutamate. It functions in the pathway amino-acid biosynthesis; L-serine biosynthesis; L-serine from 3-phospho-D-glycerate: step 2/3. It participates in cofactor biosynthesis; pyridoxine 5'-phosphate biosynthesis; pyridoxine 5'-phosphate from D-erythrose 4-phosphate: step 3/5. Catalyzes the reversible conversion of 3-phosphohydroxypyruvate to phosphoserine and of 3-hydroxy-2-oxo-4-phosphonooxybutanoate to phosphohydroxythreonine. The sequence is that of Phosphoserine aminotransferase from Nitrosomonas europaea (strain ATCC 19718 / CIP 103999 / KCTC 2705 / NBRC 14298).